Reading from the N-terminus, the 539-residue chain is Probable transcription factor GLK2 (539 aa).

The tract at residues 86–218 is disordered; sequence FASSPDDEPP…NSHGKRKVKV (133 aa). Composition is skewed to low complexity over residues 99–111 and 121–130; these read SAPG…AAAG and AAAAAAAAAA. Basic and acidic residues predominate over residues 144–161; the sequence is KKDDEERSSSLPEEKDAK. The HTH myb-type domain occupies 212–271; that stretch reads GKRKVKVDWTPELHRRFVQAVEQLGIDKAVPSRILELMGIECLTRHNIASHLQKYRSHRK. A DNA-binding region (H-T-H motif) is located at residues 242–267; the sequence is PSRILELMGIECLTRHNIASHLQKYR.

As to expression, expressed in leaves.

It is found in the nucleus. Functionally, probable transcriptional activator that promotes chloroplast development. Acts as an activator of nuclear photosynthetic genes involved in chlorophyll biosynthesis, light harvesting, and electron transport. This Oryza sativa subsp. japonica (Rice) protein is Probable transcription factor GLK2 (GLK2).